A 267-amino-acid polypeptide reads, in one-letter code: Protein LicA (267 aa).

It belongs to the peptidase S49 family.

In terms of biological role, mediates phase variation of the LPS epitopes. Phase variation of H.influenza LPS epitopes expressed by LicA is determined by a translational switch. The polypeptide is Protein LicA (licA) (Haemophilus influenzae (strain ATCC 51907 / DSM 11121 / KW20 / Rd)).